The sequence spans 302 residues: tRNA dimethylallyltransferase 1 (302 aa).

Residue 6-13 (GPTACGKT) participates in ATP binding. 8 to 13 (TACGKT) is a binding site for substrate. Interaction with substrate tRNA stretches follow at residues 31–34 (DSRQ) and 154–158 (QRAIR).

Belongs to the IPP transferase family. Monomer. Mg(2+) is required as a cofactor.

The catalysed reaction is adenosine(37) in tRNA + dimethylallyl diphosphate = N(6)-dimethylallyladenosine(37) in tRNA + diphosphate. Catalyzes the transfer of a dimethylallyl group onto the adenine at position 37 in tRNAs that read codons beginning with uridine, leading to the formation of N6-(dimethylallyl)adenosine (i(6)A). The polypeptide is tRNA dimethylallyltransferase 1 (Porphyromonas gingivalis (strain ATCC 33277 / DSM 20709 / CIP 103683 / JCM 12257 / NCTC 11834 / 2561)).